The sequence spans 124 residues: Ragulator complex protein LAMTOR3 (124 aa).

Residues 57-70 (TDQGSKLGLSKNKS) form a required for interaction with LAMTOR2 region.

This sequence belongs to the LAMTOR3 family. As to quaternary structure, part of the Ragulator complex composed of LAMTOR1, LAMTOR2, LAMTOR3, LAMTOR4 and LAMTOR5. LAMTOR4 and LAMTOR5 form a heterodimer that interacts, through LAMTOR1, with a LAMTOR2, LAMTOR3 heterodimer. The Ragulator complex interacts with both the mTORC1 complex and heterodimers constituted of the Rag GTPases RagA/RRAGA, RagB/RRAGB, RagC/RRAGC and RagD/RRAGD; regulated by amino acid availability. The Ragulator complex interacts with SLC38A9; the probable amino acid sensor. Interacts with LAMTOR1 and LAMTOR2; the interaction is direct. Component of the lysosomal folliculin complex (LFC), composed of FLCN, FNIP1 (or FNIP2), RagA/RRAGA or RagB/RRAGB GDP-bound, RagC/RRAGC or RagD/RRAGD GTP-bound, and Ragulator. Interacts with MAP2K1/MEK1 and MAPK2. Interacts with MORG1.

The protein localises to the late endosome membrane. Functionally, as part of the Ragulator complex it is involved in amino acid sensing and activation of mTORC1, a signaling complex promoting cell growth in response to growth factors, energy levels, and amino acids. Activated by amino acids through a mechanism involving the lysosomal V-ATPase, the Ragulator plays a dual role for the small GTPases Rag (RagA/RRAGA, RagB/RRAGB, RagC/RRAGC and/or RagD/RRAGD): it (1) acts as a guanine nucleotide exchange factor (GEF), activating the small GTPases Rag and (2) mediates recruitment of Rag GTPases to the lysosome membrane. Activated Ragulator and Rag GTPases function as a scaffold recruiting mTORC1 to lysosomes where it is in turn activated. Adapter protein that enhances the efficiency of the MAP kinase cascade facilitating the activation of MAPK2. The sequence is that of Ragulator complex protein LAMTOR3 (Lamtor3) from Mus musculus (Mouse).